The following is a 217-amino-acid chain: Uracil phosphoribosyltransferase (217 aa).

5-phospho-alpha-D-ribose 1-diphosphate-binding positions include R84, R109, and 137 to 145 (DPMLATGGS). Residues I202 and 207–209 (GDA) contribute to the uracil site. D208 is a binding site for 5-phospho-alpha-D-ribose 1-diphosphate.

This sequence belongs to the UPRTase family. The cofactor is Mg(2+).

The enzyme catalyses UMP + diphosphate = 5-phospho-alpha-D-ribose 1-diphosphate + uracil. Its pathway is pyrimidine metabolism; UMP biosynthesis via salvage pathway; UMP from uracil: step 1/1. Allosterically activated by GTP. In terms of biological role, catalyzes the conversion of uracil and 5-phospho-alpha-D-ribose 1-diphosphate (PRPP) to UMP and diphosphate. The polypeptide is Uracil phosphoribosyltransferase (Synechococcus elongatus (strain ATCC 33912 / PCC 7942 / FACHB-805) (Anacystis nidulans R2)).